A 926-amino-acid chain; its full sequence is Glycogenin (926 aa).

The UDP site is built by Leu-10, Thr-12, Tyr-16, and Arg-85. Residues Leu-10, Thr-12, Tyr-16, Arg-85, Lys-94, Asp-111, Ala-112, Asp-113, Asn-145, Ser-146, Asp-184, Asp-187, and Gln-188 each coordinate UDP-alpha-D-glucose. Residues Asp-111, Ala-112, and Asp-113 each contribute to the UDP site. Asp-111 lines the Mn(2+) pocket. A Mn(2+)-binding site is contributed by Asp-113. An O-linked (Glc...) tyrosine glycan is attached at Tyr-219. Residues His-236, Gly-239, and Lys-242 each coordinate UDP. His-236 lines the Mn(2+) pocket. UDP-alpha-D-glucose contacts are provided by Gly-239 and Lys-242. Disordered regions lie at residues 379–432 (PSVS…PEMS), 452–476 (YYAH…LPKE), 547–584 (SIQN…PPRH), 611–749 (MSGK…ETVQ), and 768–903 (LPHA…PNTD). Residues 386-402 (LTPPPADAAPAPAPAPV) are compositionally biased toward pro residues. Residues 404 to 413 (TQTEQKTAQP) are compositionally biased toward polar residues. The span at 456-469 (PESHRPATEHKEPE) shows a compositional bias: basic and acidic residues. Positions 557-566 (AHSQHQSHAT) are enriched in low complexity. Residues 655-683 (SLHSLQSVPGTPRTQYSTFGKSPRLTNAR) show a composition bias toward polar residues. The span at 692-704 (EQPEDSADGDDEN) shows a compositional bias: acidic residues. Residues 733-745 (DRWAQTDRVKTVD) are compositionally biased toward basic and acidic residues. The segment covering 788-798 (SGNGRAGGGGQ) has biased composition (gly residues). Over residues 800 to 812 (EAQTQHQSTYYEY) the composition is skewed to polar residues. 2 stretches are compositionally biased toward low complexity: residues 813–824 (QQQHPHSQQSRQ) and 851–875 (HAQG…NPNL).

Belongs to the glycosyltransferase 8 family. Glycogenin subfamily. It depends on Mn(2+) as a cofactor.

The protein localises to the cytoplasm. It is found in the vacuole. The catalysed reaction is L-tyrosyl-[glycogenin] + UDP-alpha-D-glucose = alpha-D-glucosyl-L-tyrosyl-[glycogenin] + UDP + H(+). The enzyme catalyses [1,4-alpha-D-glucosyl](n)-L-tyrosyl-[glycogenin] + UDP-alpha-D-glucose = [1,4-alpha-D-glucosyl](n+1)-L-tyrosyl-[glycogenin] + UDP + H(+). Self-glucosylating initiator of glycogen synthesis. It catalyzes the formation of a short alpha (1,4)-glucosyl chain covalently attached via a glucose 1-O-tyrosyl linkage to internal tyrosine residues and these chains act as primers for the elongation reaction catalyzed by glycogen synthase. This is Glycogenin from Cryptococcus neoformans var. grubii serotype A (strain H99 / ATCC 208821 / CBS 10515 / FGSC 9487) (Filobasidiella neoformans var. grubii).